The chain runs to 198 residues: NAD(P)H dehydrogenase (quinone) (198 aa).

One can recognise a Flavodoxin-like domain in the interval 4–189 (ILVLYYSMYG…SIARYQGEYV (186 aa)). FMN-binding positions include 10 to 15 (SMYGHI) and 78 to 80 (TRF). Residue Tyr-12 coordinates NAD(+). Trp-98 lines the substrate pocket. FMN contacts are provided by residues 113–118 (STGTGG) and His-133.

This sequence belongs to the WrbA family. The cofactor is FMN.

The enzyme catalyses a quinone + NADH + H(+) = a quinol + NAD(+). It carries out the reaction a quinone + NADPH + H(+) = a quinol + NADP(+). The sequence is that of NAD(P)H dehydrogenase (quinone) from Citrobacter koseri (strain ATCC BAA-895 / CDC 4225-83 / SGSC4696).